The chain runs to 128 residues: MLLKSIHHIAIICSDYEKSKAFYVHKLGFQVIQETYREERGSYKLDLSLNGSYVIELFSFPDPPERQTRPEAAGLRHLAFTVGSLDKAVQELHEKGIETEPIRTDPLTGKRFTFFFDPDQLPLELYEQ.

Positions 5 to 128 constitute a VOC domain; sequence SIHHIAIICS…DQLPLELYEQ (124 aa). A divalent metal cation is bound by residues H8, E56, H77, and E124.

This is an uncharacterized protein from Bacillus subtilis (strain 168).